The following is a 616-amino-acid chain: Proline--tRNA ligase (616 aa).

The protein belongs to the class-II aminoacyl-tRNA synthetase family. ProS type 1 subfamily. In terms of assembly, homodimer.

The protein localises to the cytoplasm. The enzyme catalyses tRNA(Pro) + L-proline + ATP = L-prolyl-tRNA(Pro) + AMP + diphosphate. In terms of biological role, catalyzes the attachment of proline to tRNA(Pro) in a two-step reaction: proline is first activated by ATP to form Pro-AMP and then transferred to the acceptor end of tRNA(Pro). As ProRS can inadvertently accommodate and process non-cognate amino acids such as alanine and cysteine, to avoid such errors it has two additional distinct editing activities against alanine. One activity is designated as 'pretransfer' editing and involves the tRNA(Pro)-independent hydrolysis of activated Ala-AMP. The other activity is designated 'posttransfer' editing and involves deacylation of mischarged Ala-tRNA(Pro). The misacylated Cys-tRNA(Pro) is not edited by ProRS. This is Proline--tRNA ligase from Streptococcus gordonii (strain Challis / ATCC 35105 / BCRC 15272 / CH1 / DL1 / V288).